The sequence spans 320 residues: Transcription factor bHLH34 (320 aa).

A bHLH domain is found at 162–213 (SKPGTKACREKLRREKLNDKFMDLSSVLEPGRTPKTDKSAILDDAIRVVNQL). Positions 299–320 (WSPLPPADRDTSRDLKNLPPVA) are disordered. Residues 305–314 (ADRDTSRDLK) are compositionally biased toward basic and acidic residues.

Homodimer. As to expression, expressed constitutively in roots, leaves, stems, and flowers.

It is found in the nucleus. The polypeptide is Transcription factor bHLH34 (BHLH34) (Arabidopsis thaliana (Mouse-ear cress)).